The sequence spans 210 residues: Pyridoxine/pyridoxamine 5'-phosphate oxidase (210 aa).

Substrate is bound by residues 7–10 (RQSY) and Lys65. FMN-binding positions include 60–65 (RIVLIK), 75–76 (FT), Arg81, Lys82, and Gln104. The substrate site is built by Tyr122, Arg126, and Ser130. FMN is bound by residues 139-140 (QS) and Trp182. 188 to 190 (RLH) provides a ligand contact to substrate. Position 192 (Arg192) interacts with FMN.

The protein belongs to the pyridoxamine 5'-phosphate oxidase family. Homodimer. It depends on FMN as a cofactor.

It catalyses the reaction pyridoxamine 5'-phosphate + O2 + H2O = pyridoxal 5'-phosphate + H2O2 + NH4(+). The catalysed reaction is pyridoxine 5'-phosphate + O2 = pyridoxal 5'-phosphate + H2O2. The protein operates within cofactor metabolism; pyridoxal 5'-phosphate salvage; pyridoxal 5'-phosphate from pyridoxamine 5'-phosphate: step 1/1. It participates in cofactor metabolism; pyridoxal 5'-phosphate salvage; pyridoxal 5'-phosphate from pyridoxine 5'-phosphate: step 1/1. Catalyzes the oxidation of either pyridoxine 5'-phosphate (PNP) or pyridoxamine 5'-phosphate (PMP) into pyridoxal 5'-phosphate (PLP). This is Pyridoxine/pyridoxamine 5'-phosphate oxidase from Bordetella bronchiseptica (strain ATCC BAA-588 / NCTC 13252 / RB50) (Alcaligenes bronchisepticus).